We begin with the raw amino-acid sequence, 239 residues long: Probable 2-phosphosulfolactate phosphatase (239 aa).

It belongs to the ComB family. Mg(2+) is required as a cofactor.

The catalysed reaction is (2R)-O-phospho-3-sulfolactate + H2O = (2R)-3-sulfolactate + phosphate. In Clostridium botulinum (strain 657 / Type Ba4), this protein is Probable 2-phosphosulfolactate phosphatase.